The primary structure comprises 312 residues: tRNA-cytidine(32) 2-sulfurtransferase (312 aa).

The PP-loop motif motif lies at 47-52 (SGGKDS). Residues Cys-122, Cys-125, and Cys-213 each contribute to the [4Fe-4S] cluster site.

This sequence belongs to the TtcA family. As to quaternary structure, homodimer. It depends on Mg(2+) as a cofactor. The cofactor is [4Fe-4S] cluster.

Its subcellular location is the cytoplasm. The catalysed reaction is cytidine(32) in tRNA + S-sulfanyl-L-cysteinyl-[cysteine desulfurase] + AH2 + ATP = 2-thiocytidine(32) in tRNA + L-cysteinyl-[cysteine desulfurase] + A + AMP + diphosphate + H(+). Its pathway is tRNA modification. In terms of biological role, catalyzes the ATP-dependent 2-thiolation of cytidine in position 32 of tRNA, to form 2-thiocytidine (s(2)C32). The sulfur atoms are provided by the cysteine/cysteine desulfurase (IscS) system. The sequence is that of tRNA-cytidine(32) 2-sulfurtransferase from Shewanella frigidimarina (strain NCIMB 400).